We begin with the raw amino-acid sequence, 215 residues long: Large ribosomal subunit protein uL3 (215 aa).

The tract at residues 136–155 is disordered; that stretch reads GVSISHRSHGSTGQRQDPGK. The residue at position 151 (Gln-151) is an N5-methylglutamine.

This sequence belongs to the universal ribosomal protein uL3 family. As to quaternary structure, part of the 50S ribosomal subunit. Forms a cluster with proteins L14 and L19. Methylated by PrmB.

Functionally, one of the primary rRNA binding proteins, it binds directly near the 3'-end of the 23S rRNA, where it nucleates assembly of the 50S subunit. The polypeptide is Large ribosomal subunit protein uL3 (Rickettsia felis (strain ATCC VR-1525 / URRWXCal2) (Rickettsia azadi)).